A 547-amino-acid polypeptide reads, in one-letter code: Chaperonin GroEL (547 aa).

ATP is bound by residues 30–33, Lys-51, 87–91, Gly-415, 479–481, and Asp-495; these read TLGP, DGTTT, and NAA.

It belongs to the chaperonin (HSP60) family. Forms a cylinder of 14 subunits composed of two heptameric rings stacked back-to-back. Interacts with the co-chaperonin GroES.

The protein localises to the cytoplasm. The enzyme catalyses ATP + H2O + a folded polypeptide = ADP + phosphate + an unfolded polypeptide.. In terms of biological role, together with its co-chaperonin GroES, plays an essential role in assisting protein folding. The GroEL-GroES system forms a nano-cage that allows encapsulation of the non-native substrate proteins and provides a physical environment optimized to promote and accelerate protein folding. The protein is Chaperonin GroEL of Cupriavidus necator (strain ATCC 17699 / DSM 428 / KCTC 22496 / NCIMB 10442 / H16 / Stanier 337) (Ralstonia eutropha).